Reading from the N-terminus, the 134-residue chain is Large ribosomal subunit protein eL32 (134 aa).

The protein belongs to the eukaryotic ribosomal protein eL32 family.

The polypeptide is Large ribosomal subunit protein eL32 (RpL32) (Drosophila affinis (Fruit fly)).